A 266-amino-acid polypeptide reads, in one-letter code: HLA class II histocompatibility antigen, DRB1 beta chain (266 aa).

The signal sequence occupies residues 1–29 (MVCLKLPGGSCMTALTVTLMVLSSPLALS). The interval 30-124 (GDTRPRFLWQ…VESFTVQRRV (95 aa)) is beta-1. Over 30 to 227 (GDTRPRFLWQ…RARSESAQSK (198 aa)) the chain is Extracellular. Residues cysteine 44 and cysteine 108 are joined by a disulfide bond. N-linked (GlcNAc...) asparagine glycosylation occurs at asparagine 48. Positions 86, 90, 110, 111, and 122 each coordinate a peptide antigen. The segment at 125–227 (QPKVTVYPSK…RARSESAQSK (103 aa)) is beta-2. Residues 126–214 (PKVTVYPSKT…EHPSVTSPLT (89 aa)) enclose the Ig-like C1-type domain. Cysteine 146 and cysteine 202 are disulfide-bonded. The chain crosses the membrane as a helical span at residues 228–248 (MLSGVGGFVLGLLFLGAGLFI). The Cytoplasmic segment spans residues 249 to 266 (YFRNQKGHSGLQPTGFLS). Residue lysine 254 forms a Glycyl lysine isopeptide (Lys-Gly) (interchain with G-Cter in ubiquitin) linkage.

Heterotrimer that consists of an alpha chain HLA-DRA, a beta chain HLA-DRB1 and a peptide (peptide-MHCII). Newly synthesized alpha and beta chains forms a heterodimer (MHCII) that associates with the CD74/invariant chain (Ii) in the endoplasmic reticulum (ER). Ii is a trimer composed of three subunits and each subunit interacts with one MHCII dimer, blocking the peptide-binding cleft. As a result, MHCII molecules cannot bind peptides present in the ER. The complex of MHCII and CD74/Ii is transported in vesicles from ER to Golgi to lysosomes, where it encounters antigenic peptides generated via proteolysis of endocytosed antigens. MHCII dimers are dissociated from CD74/Ii by the combined action of proteolysis and HLA-DM. Lysosomal enzymes such as cathepsin, degrade CD74/Ii leaving a 24 amino acid remnant called class II-associated Ii or CLIP. Interacts (via the peptide binding cleft) with CLIP; this interaction inhibits antigen peptide binding before entry in the endosomal compartment. The displacement of CLIP and replacement by a high affinity peptide in lysosomes is performed by HLA-DM heterodimer. HLA-DM catalyzes CLIP dissociation from MHCII, stabilizes empty MHCII and mediates the selection of high affinity peptides. Interacts with HLA-DM heterodimer; this interaction is direct. Interacts with TCR (via CDR3). Interacts (via beta-2 domain) with CD4 coreceptor (via Ig-like V-type domain); this interaction is of exceptionally low affinity yet necessary for optimal recognition of antigenic peptides. In terms of assembly, (Microbial infection) Interacts with Staphylococcus aureus enterotoxin A/entA, enterotoxin B/entB, enterotoxin C1/entC1, enterotoxin D/entD and enterotoxin H/entH. Enterotoxins bind outside the peptide-binding cleft of MHCII: enterotoxin H/entH interacts via the beta-1 domain of MHCII and in a zinc-dependent way, whereas enterotoxin B/entB interacts primarily via the alpha-1 domain. As to quaternary structure, (Microbial infection) Interacts with Epstein-Barr virus gp42 protein. Ubiquitinated by MARCHF1 and MARCHF8 at Lys-254 leading to sorting into the endosome system and down-regulation of MHCII. Expressed in professional APCs: monocyte/macrophages, dendritic cells and B cells (at protein level). Expressed in thymic epithelial cells (at protein level).

It localises to the cell membrane. The protein resides in the endoplasmic reticulum membrane. The protein localises to the lysosome membrane. Its subcellular location is the late endosome membrane. It is found in the autolysosome membrane. Functionally, a beta chain of antigen-presenting major histocompatibility complex class II (MHCII) molecule. In complex with the alpha chain HLA-DRA, displays antigenic peptides on professional antigen presenting cells (APCs) for recognition by alpha-beta T cell receptor (TCR) on HLA-DRB1-restricted CD4-positive T cells. This guides antigen-specific T-helper effector functions, both antibody-mediated immune response and macrophage activation, to ultimately eliminate the infectious agents and transformed cells. Typically presents extracellular peptide antigens of 10 to 30 amino acids that arise from proteolysis of endocytosed antigens in lysosomes. In the tumor microenvironment, presents antigenic peptides that are primarily generated in tumor-resident APCs likely via phagocytosis of apoptotic tumor cells or macropinocytosis of secreted tumor proteins. Presents peptides derived from intracellular proteins that are trapped in autolysosomes after macroautophagy, a mechanism especially relevant for T cell selection in the thymus and central immune tolerance. The selection of the immunodominant epitopes follows two processing modes: 'bind first, cut/trim later' for pathogen-derived antigenic peptides and 'cut first, bind later' for autoantigens/self-peptides. The anchor residue at position 1 of the peptide N-terminus, usually a large hydrophobic residue, is essential for high affinity interaction with MHCII molecules. In terms of biological role, allele DRB1*01:01: Displays an immunodominant epitope derived from Bacillus anthracis pagA/protective antigen, PA (KLPLYISNPNYKVNVYAVT), to both naive and PA-specific memory CD4-positive T cells. Presents immunodominant HIV-1 gag peptide (FRDYVDRFYKTLRAEQASQE) on infected dendritic cells for recognition by TRAV24-TRBV2 TCR on CD4-positive T cells and controls viral load. May present to T-helper 1 cells several HRV-16 epitopes derived from capsid proteins VP1 (PRFSLPFLSIASAYYMFYDG) and VP2 (PHQFINLRSNNSATLIVPYV), contributing to viral clearance. Displays commonly recognized peptides derived from IAV external protein HA (PKYVKQNTLKLAT and SNGNFIAPEYAYKIVK) and from internal proteins M, NP and PB1, with M-derived epitope (GLIYNRMGAVTTEV) being the most immunogenic. Presents a self-peptide derived from COL4A3 (GWISLWKGFSF) to TCR (TRAV14 biased) on CD4-positive, FOXP3-positive regulatory T cells and mediates immune tolerance to self. May present peptides derived from oncofetal trophoblast glycoprotein TPBG 5T4, known to be recognized by both T-helper 1 and regulatory T cells. Displays with low affinity a self-peptide derived from MBP (VHFFKNIVTPRTP). Allele DRB1*03:01: May present to T-helper 1 cells an HRV-16 epitope derived from capsid protein VP2 (NEKQPSDDNWLNFDGTLLGN), contributing to viral clearance. Displays self-peptides derived from retinal SAG (NRERRGIALDGKIKHE) and thyroid TG (LSSVVVDPSIRHFDV). Presents viral epitopes derived from HHV-6B gH/U48 and U85 antigens to polyfunctional CD4-positive T cells with cytotoxic activity implicated in control of HHV-6B infection. Presents several immunogenic epitopes derived from C.tetani neurotoxin tetX, playing a role in immune recognition and long-term protection. Its function is as follows. Allele DRB1*04:01: Presents an immunodominant bacterial epitope derived from M.tuberculosis esxB/culture filtrate antigen CFP-10 (EISTNIRQAGVQYSR), eliciting CD4-positive T cell effector functions such as IFNG production and cytotoxic activity. May present to T-helper 1 cells an HRV-16 epitope derived from capsid protein VP2 (NEKQPSDDNWLNFDGTLLGN), contributing to viral clearance. Presents tumor epitopes derived from melanoma-associated TYR antigen (QNILLSNAPLGPQFP and DYSYLQDSDPDSFQD), triggering CD4-positive T cell effector functions such as GMCSF production. Displays preferentially citrullinated self-peptides derived from VIM (GVYATR/citSSAVR and SAVRAR/citSSVPGVR) and ACAN (VVLLVATEGR/ CitVRVNSAYQDK). Displays self-peptides derived from COL2A1. Functionally, allele DRB1*04:02: Displays native or citrullinated self-peptides derived from VIM. In terms of biological role, allele DRB1*04:04: May present to T-helper 1 cells several HRV-16 epitopes derived from capsid proteins VP1 (HIVMQYMYVPPGAPIPTTRN) and VP2 (RGDSTITSQDVANAVVGYGV), contributing to viral clearance. Displays preferentially citrullinated self-peptides derived from VIM (SAVRAR/citSSVPGVR). Allele DRB1*04:05: May present to T-helper 1 cells an immunogenic epitope derived from tumor-associated antigen WT1 (KRYFKLSHLQMHSRKH), likely providing for effective antitumor immunity in a wide range of solid and hematological malignancies. Its function is as follows. Allele DRB1*05:01: Presents an immunodominant HIV-1 gag peptide (FRDYVDRFYKTLRAEQASQE) on infected dendritic cells for recognition by TRAV24-TRBV2 TCR on CD4-positive T cells and controls viral load. Functionally, allele DRB1*07:01: Upon EBV infection, presents latent antigen EBNA2 peptide (PRSPTVFYNIPPMPLPPSQL) to CD4-positive T cells, driving oligoclonal expansion and selection of a dominant virus-specific memory T cell subset with cytotoxic potential to directly eliminate virus-infected B cells. May present to T-helper 1 cells several HRV-16 epitopes derived from capsid proteins VP1 (PRFSLPFLSIASAYYMFYDG) and VP2 (VPYVNAVPMDSMVRHNNWSL), contributing to viral clearance. In the context of tumor immunesurveillance, may present to T-helper 1 cells an immunogenic epitope derived from tumor-associated antigen WT1 (MTEYKLVVVGAVGVGKSALTIQLI), likely providing for effective antitumor immunity in a wide range of solid and hematological malignancies. In metastatic epithelial tumors, presents to intratumoral CD4-positive T cells a KRAS neoantigen (MTEYKLVVVGAVGVGKSALTIQLI) carrying G12V hotspot driver mutation and may mediate tumor regression. In terms of biological role, allele DRB1*11:01: Displays an immunodominant HIV-1 gag peptide (FRDYVDRFYKTLRAEQASQE) on infected dendritic cells for recognition by TRAV24-TRBV2 TCR on CD4-positive T cells and controls viral load. May present to T-helper 1 cells an HRV-16 epitope derived from capsid protein VP2 (SDRIIQITRGDSTITSQDVA), contributing to viral clearance. Presents several immunogenic epitopes derived from C.tetani neurotoxin tetX, playing a role in immune recognition and longterm protection. In the context of tumor immunesurveillance, may present tumor-derived neoantigens to CD4-positive T cells and trigger anti-tumor helper functions. Allele DRB1*13:01: Presents viral epitopes derived from HHV-6B antigens to polyfunctional CD4-positive T cells implicated in control of HHV-6B infection. Its function is as follows. Allele DRB1*15:01: May present to T-helper 1 cells an HRV-16 epitope derived from capsid protein VP2 (SNNSATLIVPYVNAVPMDSM), contributing to viral clearance. Displays a self-peptide derived from MBP (ENPVVHFFKNIVTPR). May present to T-helper 1 cells an immunogenic epitope derived from tumor-associated antigen WT1 (KRYFKLSHLQMHSRKH), likely providing for effective antitumor immunity in a wide range of solid and hematological malignancies. Functionally, allele DRB1*15:02: Displays an immunodominant HIV-1 gag peptide (FRDYVDRFYKTLRAEQASQE) on infected dendritic cells for recognition by TRAV24-TRBV2 TCR on CD4-positive T cells and controls viral load. May present to T-helper 1 cells an immunogenic epitope derived from tumor-associated antigen WT1 (KRYFKLSHLQMHSRKH), likely providing for effective antitumor immunity in a wide range of solid and hematological malignancies. In terms of biological role, (Microbial infection) Acts as a receptor for Epstein-Barr virus on lymphocytes. This is HLA class II histocompatibility antigen, DRB1 beta chain from Homo sapiens (Human).